The sequence spans 305 residues: Ribonuclease BN (305 aa).

Positions 64, 66, 68, 69, 141, 212, and 270 each coordinate Zn(2+). The active-site Proton acceptor is the D68.

It belongs to the RNase Z family. RNase BN subfamily. In terms of assembly, homodimer. Zn(2+) serves as cofactor.

Functionally, zinc phosphodiesterase, which has both exoribonuclease and endoribonuclease activities. The sequence is that of Ribonuclease BN from Salmonella gallinarum (strain 287/91 / NCTC 13346).